Consider the following 446-residue polypeptide: Eukaryotic translation initiation factor 3 subunit E (446 aa).

The 170-residue stretch at 256–425 folds into the PCI domain; the sequence is TDLFFSPAYI…GTVIMNHPPQ (170 aa).

It belongs to the eIF-3 subunit E family. Component of the eukaryotic translation initiation factor 3 (eIF-3) complex.

It localises to the cytoplasm. Its function is as follows. Component of the eukaryotic translation initiation factor 3 (eIF-3) complex, which is involved in protein synthesis of a specialized repertoire of mRNAs and, together with other initiation factors, stimulates binding of mRNA and methionyl-tRNAi to the 40S ribosome. The eIF-3 complex specifically targets and initiates translation of a subset of mRNAs involved in cell proliferation. The polypeptide is Eukaryotic translation initiation factor 3 subunit E (int6) (Aspergillus terreus (strain NIH 2624 / FGSC A1156)).